A 337-amino-acid chain; its full sequence is tRNA N6-adenosine threonylcarbamoyltransferase (337 aa).

The Fe cation site is built by histidine 111 and histidine 115. Substrate contacts are provided by residues 134 to 138 (LVSGG), aspartate 167, glycine 180, and asparagine 272. Aspartate 300 serves as a coordination point for Fe cation.

The protein belongs to the KAE1 / TsaD family. Fe(2+) is required as a cofactor.

It is found in the cytoplasm. It carries out the reaction L-threonylcarbamoyladenylate + adenosine(37) in tRNA = N(6)-L-threonylcarbamoyladenosine(37) in tRNA + AMP + H(+). Functionally, required for the formation of a threonylcarbamoyl group on adenosine at position 37 (t(6)A37) in tRNAs that read codons beginning with adenine. Is involved in the transfer of the threonylcarbamoyl moiety of threonylcarbamoyl-AMP (TC-AMP) to the N6 group of A37, together with TsaE and TsaB. TsaD likely plays a direct catalytic role in this reaction. This chain is tRNA N6-adenosine threonylcarbamoyltransferase, found in Aeromonas hydrophila subsp. hydrophila (strain ATCC 7966 / DSM 30187 / BCRC 13018 / CCUG 14551 / JCM 1027 / KCTC 2358 / NCIMB 9240 / NCTC 8049).